The sequence spans 176 residues: F(420)H(2) dehydrogenase subunit J (176 aa).

5 helical membrane passes run 13 to 33 (TAVF…VVIA), 39 to 59 (AGLA…LLNA), 64 to 84 (VIQV…AVML), 99 to 119 (PLAF…AFGT), and 140 to 160 (IGML…IVLL).

The protein belongs to the complex I subunit 6 family. The FPO complex is composed of at least 13 different subunits. FpoA, FpoH, FpoJ, FpoK, FpoL, FpoM and FpoN proteins constitute the membrane sector of the complex.

The protein resides in the cell membrane. It carries out the reaction methanophenazine + reduced coenzyme F420-(gamma-L-Glu)(n) = dihydromethanophenazine + oxidized coenzyme F420-(gamma-L-Glu)(n) + H(+). In terms of biological role, component of the F(420)H(2) dehydrogenase (FPO complex) which is part of the energy-conserving F(420)H(2):heterodisulfide oxidoreductase system. The membrane-bound electron transfer system of the complex plays an important role in the metabolism of methylotrophic methanogens when the organisms grow on methanol or methylamines. Catalyzes the oxidation of methanophenazine to dihydromethanophenazine. It shuttles electrons from F(420)H(2), via FAD and iron-sulfur (Fe-S) centers, to methanophenazine (an electron carrier in the membrane). It couples the redox reaction to proton translocation (for every two electrons transferred, two hydrogen ions are translocated across the cytoplasmic membrane), and thus conserves the redox energy in a proton gradient. It also catalyzes the oxidation of F(420)H(2) with quinones such as 2,3-dimethyl-1,4-naphthoquinone, 2-methyl-1,4-naphthoquinone and tetramethyl-p-benzoquinone. The protein is F(420)H(2) dehydrogenase subunit J (fpoJ) of Methanosarcina mazei (strain ATCC BAA-159 / DSM 3647 / Goe1 / Go1 / JCM 11833 / OCM 88) (Methanosarcina frisia).